A 207-amino-acid polypeptide reads, in one-letter code: MARYIGPKAKLSRREGTDLFLKSARRSLADKCKLDSKPGQHGRTSGARTSDYGNQLREKQKVKRIYGVLERQFRRYFAEADRRKGNTGENLLQLLESRLDNVVYRMGFGSTRAEARQLVSHKAILVNGETLNVPSAQIKSGDIVSVREQSKKQVRIAEALSLAEQSGFPTWVAVDAKKFEGTYKQAPDRADISGDINESLIVELYSR.

The tract at residues 31–54 (KCKLDSKPGQHGRTSGARTSDYGN) is disordered. Positions 42–53 (GRTSGARTSDYG) are enriched in polar residues. In terms of domain architecture, S4 RNA-binding spans 97–160 (SRLDNVVYRM…KKQVRIAEAL (64 aa)).

It belongs to the universal ribosomal protein uS4 family. Part of the 30S ribosomal subunit. Contacts protein S5. The interaction surface between S4 and S5 is involved in control of translational fidelity.

Its function is as follows. One of the primary rRNA binding proteins, it binds directly to 16S rRNA where it nucleates assembly of the body of the 30S subunit. In terms of biological role, with S5 and S12 plays an important role in translational accuracy. The chain is Small ribosomal subunit protein uS4 from Cupriavidus metallidurans (strain ATCC 43123 / DSM 2839 / NBRC 102507 / CH34) (Ralstonia metallidurans).